A 685-amino-acid polypeptide reads, in one-letter code: Translation initiation factor IF-2 (685 aa).

Residues 185 to 354 form the tr-type G domain; the sequence is KRPPVVTVMG…LLTAEMQELK (170 aa). Residues 194 to 201 form a G1 region; that stretch reads GHVDHGKT. 194–201 provides a ligand contact to GTP; it reads GHVDHGKT. Residues 219 to 223 are G2; it reads GITQH. The segment at 240–243 is G3; sequence DTPG. Residues 240-244 and 294-297 contribute to the GTP site; these read DTPGH and NKMD. The interval 294 to 297 is G4; that stretch reads NKMD. The tract at residues 330-332 is G5; sequence SAH.

The protein belongs to the TRAFAC class translation factor GTPase superfamily. Classic translation factor GTPase family. IF-2 subfamily.

It is found in the cytoplasm. In terms of biological role, one of the essential components for the initiation of protein synthesis. Protects formylmethionyl-tRNA from spontaneous hydrolysis and promotes its binding to the 30S ribosomal subunits. Also involved in the hydrolysis of GTP during the formation of the 70S ribosomal complex. The polypeptide is Translation initiation factor IF-2 (Clostridium tetani (strain Massachusetts / E88)).